We begin with the raw amino-acid sequence, 312 residues long: Protease HtpX homolog (312 aa).

2 consecutive transmembrane segments (helical) span residues 6 to 26 and 28 to 48; these read TAVLLAGLTALFMVVGFAIGG and GGMMVALLVAAGMNLFSYWYA. Residue His130 coordinates Zn(2+). Glu131 is an active-site residue. His134 contacts Zn(2+). 2 helical membrane-spanning segments follow: residues 145–165 and 173–193; these read ITASIAGAISMLANFGLFFGG and PFGGISAILMAILAPIAAMVV. Glu202 contacts Zn(2+). Low complexity predominate over residues 287-297; sequence PAPARAAPARG. Residues 287–312 form a disordered region; sequence PAPARAAPARGPWGGNTGGTRRGPWG. Residues 298–312 are compositionally biased toward gly residues; sequence PWGGNTGGTRRGPWG.

Belongs to the peptidase M48B family. Requires Zn(2+) as cofactor.

It localises to the cell inner membrane. This chain is Protease HtpX homolog, found in Azorhizobium caulinodans (strain ATCC 43989 / DSM 5975 / JCM 20966 / LMG 6465 / NBRC 14845 / NCIMB 13405 / ORS 571).